Consider the following 354-residue polypeptide: Arginase-2, mitochondrial (354 aa).

The transit peptide at 1–22 directs the protein to the mitochondrion; the sequence is MSLRSHLSRLLRTQVHSVRKKS. Mn(2+) contacts are provided by His-120, Asp-143, His-145, and Asp-147. Residues 145 to 149, 156 to 158, and Asp-202 each bind substrate; these read HADIN and SGN. 2 residues coordinate Mn(2+): Asp-251 and Asp-253. Residues Thr-265 and Glu-296 each coordinate substrate. The interval 332-354 is disordered; it reads IVYDQLPTPSSPDESESEERVRI.

The protein belongs to the arginase family. As to quaternary structure, homotrimer. Mn(2+) is required as a cofactor.

It localises to the mitochondrion. It carries out the reaction L-arginine + H2O = urea + L-ornithine. Its pathway is nitrogen metabolism; urea cycle; L-ornithine and urea from L-arginine: step 1/1. In terms of biological role, may play a role in the regulation of extra-urea cycle arginine metabolism and also in down-regulation of nitric oxide synthesis. Extrahepatic arginase functions to regulate L-arginine bioavailability to nitric oxid synthase (NOS). Arginine metabolism is a critical regulator of innate and adaptive immune responses. Seems to be involved in negative regulation of the survival capacity of activated T cells. May suppress inflammation-related signaling in asthmatic airway epithelium. May play a role in promoting prenatal immune suppression. Regulates RPS6KB1 signaling, which promotes endothelial cell senescence and inflammation and implicates NOS3/eNOS dysfunction. Can inhibit endothelial autophagy independently of its enzymatic activity implicating mTORC2 signaling. Involved in vascular smooth muscle cell senescence and apoptosis independently of its enzymatic activity. In Bos taurus (Bovine), this protein is Arginase-2, mitochondrial (ARG2).